Reading from the N-terminus, the 97-residue chain is YcgL domain-containing protein Tcr_0238 (97 aa).

The region spanning 3-87 (LLVSAYKSAK…SEIEKMGDMP (85 aa)) is the YcgL domain. The tract at residues 78–97 (SEIEKMGDMPPPPEHLDNIF) is disordered.

The sequence is that of YcgL domain-containing protein Tcr_0238 from Hydrogenovibrio crunogenus (strain DSM 25203 / XCL-2) (Thiomicrospira crunogena).